The chain runs to 224 residues: Peptidyl-prolyl cis-trans isomerase FKBP3 (224 aa).

Position 2 is an N-acetylalanine (Ala-2). Ser-36 is subject to Phosphoserine. A disordered region spans residues 87-119; it reads NVKLNEDKPKETKSEETPDEGPPKYTKSVLKKG. The span at 89-102 shows a compositional bias: basic and acidic residues; sequence KLNEDKPKETKSEE. Lys-99 bears the N6-acetyllysine mark. Residues 128–224 enclose the PPIase FKBP-type domain; it reads GDVVHCWYTG…IFEVELVDID (97 aa). Position 152 is a phosphoserine (Ser-152). At Lys-170 the chain carries N6-acetyllysine.

It belongs to the FKBP-type PPIase family.

It localises to the nucleus. The enzyme catalyses [protein]-peptidylproline (omega=180) = [protein]-peptidylproline (omega=0). With respect to regulation, inhibited preferentially by rapamycin over FK506. In terms of biological role, FK506- and rapamycin-binding proteins (FKBPs) constitute a family of receptors for the two immunosuppressants which inhibit T-cell proliferation by arresting two distinct cytoplasmic signal transmission pathways. PPIases accelerate the folding of proteins. The sequence is that of Peptidyl-prolyl cis-trans isomerase FKBP3 (FKBP3) from Oryctolagus cuniculus (Rabbit).